A 942-amino-acid polypeptide reads, in one-letter code: Protein inturned (942 aa).

Disordered regions lie at residues 1 to 56 and 128 to 156; these read MAGL…PEWL and LPRR…KTGV. Over residues 22-32 the composition is skewed to acidic residues; sequence SQEEEEEEGDS. The span at 33–48 shows a compositional bias: low complexity; the sequence is DAGASSLGSYSSASSD. Positions 137 to 156 are enriched in polar residues; the sequence is SSNNGPVSILKHQSSQKTGV. The 83-residue stretch at 185-267 folds into the PDZ domain; sequence LLEVLVGIIH…PMQVKLTFEN (83 aa). Residues Ser-674 and Ser-678 each carry the phosphoserine modification. A disordered region spans residues 707 to 751; it reads KARKPSPSRIGGGREPTEGEESAGLSPHATPDAVRKQRESEGSDD.

It belongs to the inturned family. In terms of assembly, component of the CPLANE (ciliogenesis and planar polarity effectors) complex, composed of INTU, FUZ and WDPCP. Interacts with CPLANE1. Interacts with NPHP4 and DAAM1; INTU is mediating the interaction between NPHP4 and DAAM1. Widely expressed in E8.5 and E9.5 wild type embryos. Present in various adult organs (at protein level).

It localises to the cytoplasm. The protein resides in the cell surface. Its subcellular location is the cytoskeleton. It is found in the cilium basal body. The protein localises to the microtubule organizing center. It localises to the centrosome. The protein resides in the centriole. Functionally, plays a key role in ciliogenesis and embryonic development. Regulator of cilia formation by controlling the organization of the apical actin cytoskeleton and the positioning of the basal bodies at the apical cell surface, which in turn is essential for the normal orientation of elongating ciliary microtubules. Plays a key role in definition of cell polarity via its role in ciliogenesis but not via conversion extension. Has an indirect effect on hedgehog signaling. Proposed to function as core component of the CPLANE (ciliogenesis and planar polarity effectors) complex involved in the recruitment of peripheral IFT-A proteins to basal bodies. Required for recruitment of CPLANE2 to the mother centriole. Binds phosphatidylinositol 3-phosphate with highest affinity, followed by phosphatidylinositol 4-phosphate and phosphatidylinositol 5-phosphate. The sequence is that of Protein inturned (Intu) from Mus musculus (Mouse).